The primary structure comprises 932 residues: RNA-binding protein 12 (932 aa).

The tract at residues 97–116 (IPPANASRSGPPPSSGMSGR) is disordered. The segment covering 98 to 116 (PPANASRSGPPPSSGMSGR) has biased composition (low complexity). The region spanning 304–379 (LYVSVHGMPF…RYVEVSPATE (76 aa)) is the RRM 1 domain. Serine 352 and serine 375 each carry phosphoserine. Polar residues-rich tracts occupy residues 392-401 (KQNMGPSGQT) and 408-417 (LPRSKSPSGQ). Residues 392 to 424 (KQNMGPSGQTHPPPQTLPRSKSPSGQKRSRSRS) are disordered. 3 positions are modified to phosphoserine: serine 420, serine 422, and serine 424. One can recognise an RRM 2 domain in the interval 430–507 (FCVYLKGLPF…RFIQVHPITK (78 aa)). Serine 525 bears the Phosphoserine mark. Residues 717–734 (NGPPFNFPGNFGGSNAFG) show a composition bias toward low complexity. A disordered region spans residues 717-855 (NGPPFNFPGN…PGFASSSGKP (139 aa)). The segment covering 783–811 (SGFGGGPQNFGNGPGSLGGPPGFGSGPPG) has biased composition (gly residues). Residues 824–838 (AFGPGPGPGPGPGPG) show a composition bias toward pro residues. The 77-residue stretch at 856 to 932 (GPTVIKVQNM…PIGSRKVNLY (77 aa)) folds into the RRM 3 domain.

The protein resides in the nucleus. The chain is RNA-binding protein 12 (RBM12) from Pongo abelii (Sumatran orangutan).